Reading from the N-terminus, the 154-residue chain is Iron-sulfur cluster assembly 2 homolog, mitochondrial (154 aa).

A mitochondrion-targeting transit peptide spans 1–8 (MAAARGLS). Residues cysteine 79, cysteine 144, and cysteine 146 each contribute to the Fe cation site.

The protein belongs to the HesB/IscA family. In terms of assembly, heterotetramer; forms a dimer of dimers with IBA57. Interacts with [2Fe-2S]-ISCA2 forming the heterodimer [2Fe- 2S]-ISCA2-IBA57 complex; [2Fe-2S] cluster binding is absolutely required to promote the complex formation.

The protein localises to the mitochondrion. Its function is as follows. Involved in the maturation of mitochondrial 4Fe-4S proteins functioning late in the iron-sulfur cluster assembly pathway. May be involved in the binding of an intermediate of Fe/S cluster assembly. In Pongo abelii (Sumatran orangutan), this protein is Iron-sulfur cluster assembly 2 homolog, mitochondrial (ISCA2).